Here is a 200-residue protein sequence, read N- to C-terminus: Ras-related protein Rab-7b (200 aa).

Residues 15-22 (GALGVGKT), 34-40 (YEDYQTT), 63-67 (DTGGQ), 124-127 (NKID), and 154-155 (AK) contribute to the GTP site. 2 short sequence motifs (switch) span residues 28-41 (YVHK…QTTL) and 67-82 (QERF…KGSD). Position 186 is a phosphoserine (Ser-186). S-geranylgeranyl cysteine attachment occurs at residues Cys-199 and Cys-200.

This sequence belongs to the small GTPase superfamily. Rab family.

It localises to the late endosome. The protein resides in the lysosome. Its subcellular location is the golgi apparatus. The protein localises to the trans-Golgi network. It is found in the cytoplasmic vesicle. It localises to the phagosome. The protein resides in the phagosome membrane. Controls vesicular trafficking from endosomes to the trans-Golgi network (TGN). Acts as a negative regulator of TLR9 signaling and can suppress TLR9-triggered TNFA, IL6, and IFNB production in macrophages by promoting TLR9 lysosomal degradation. Also negatively regulates TLR4 signaling in macrophages by promoting lysosomal degradation of TLR4. Promotes megakaryocytic differentiation by increasing NF-kappa-B-dependent IL6 production and subsequently enhancing the association of STAT3 with GATA1. Not involved in the regulation of the EGF- and EGFR degradation pathway. The sequence is that of Ras-related protein Rab-7b (RAB7B) from Bos taurus (Bovine).